The primary structure comprises 576 residues: Probable DNA ligase (576 aa).

Residue Glu-235 participates in ATP binding. The active-site N6-AMP-lysine intermediate is the Lys-237. Positions 242, 257, 285, 324, 422, and 428 each coordinate ATP.

Belongs to the ATP-dependent DNA ligase family. Mg(2+) is required as a cofactor.

The enzyme catalyses ATP + (deoxyribonucleotide)n-3'-hydroxyl + 5'-phospho-(deoxyribonucleotide)m = (deoxyribonucleotide)n+m + AMP + diphosphate.. Functionally, DNA ligase that seals nicks in double-stranded DNA during DNA replication, DNA recombination and DNA repair. The protein is Probable DNA ligase of Koribacter versatilis (strain Ellin345).